A 343-amino-acid polypeptide reads, in one-letter code: S-adenosylmethionine:tRNA ribosyltransferase-isomerase (343 aa).

Belongs to the QueA family. In terms of assembly, monomer.

Its subcellular location is the cytoplasm. It catalyses the reaction 7-aminomethyl-7-carbaguanosine(34) in tRNA + S-adenosyl-L-methionine = epoxyqueuosine(34) in tRNA + adenine + L-methionine + 2 H(+). Its pathway is tRNA modification; tRNA-queuosine biosynthesis. Functionally, transfers and isomerizes the ribose moiety from AdoMet to the 7-aminomethyl group of 7-deazaguanine (preQ1-tRNA) to give epoxyqueuosine (oQ-tRNA). This chain is S-adenosylmethionine:tRNA ribosyltransferase-isomerase, found in Geobacter metallireducens (strain ATCC 53774 / DSM 7210 / GS-15).